The following is a 513-amino-acid chain: Light-independent protochlorophyllide reductase subunit B (513 aa).

Aspartate 36 is a binding site for [4Fe-4S] cluster. Aspartate 299 serves as the catalytic Proton donor. Position 434–435 (glycine 434–methionine 435) interacts with substrate.

The protein belongs to the ChlB/BchB/BchZ family. In terms of assembly, protochlorophyllide reductase is composed of three subunits; ChlL, ChlN and ChlB. Forms a heterotetramer of two ChlB and two ChlN subunits. [4Fe-4S] cluster serves as cofactor.

The protein localises to the plastid. Its subcellular location is the chloroplast. The catalysed reaction is chlorophyllide a + oxidized 2[4Fe-4S]-[ferredoxin] + 2 ADP + 2 phosphate = protochlorophyllide a + reduced 2[4Fe-4S]-[ferredoxin] + 2 ATP + 2 H2O. It participates in porphyrin-containing compound metabolism; chlorophyll biosynthesis (light-independent). Component of the dark-operative protochlorophyllide reductase (DPOR) that uses Mg-ATP and reduced ferredoxin to reduce ring D of protochlorophyllide (Pchlide) to form chlorophyllide a (Chlide). This reaction is light-independent. The NB-protein (ChlN-ChlB) is the catalytic component of the complex. The polypeptide is Light-independent protochlorophyllide reductase subunit B (Cycas taitungensis (Prince sago)).